Reading from the N-terminus, the 216-residue chain is Probable inactive E3 ubiquitin-protein ligase SINAT6 (216 aa).

An SIAH-type zinc finger spans residues 5–74 (INDLQVESRV…LLLHLRNDHN (70 aa)).

It belongs to the SINA (Seven in absentia) family. Homodimer. Interacts with SINAT1, SINAT2, SINAT3, SINAT4 and SINAT5. Interacts with ATG6 and TRAF1A. Expressed in roots, rosette leaves, cauline leaves, guard cells and flowers.

It is found in the cytoplasm. Its subcellular location is the nucleus. Its function is as follows. Probable inactive E3 ubiquitin-protein ligase that plays a role in regulation of autophagy. Upon starvation, involved in maintaining ATG6 homeostasis by competitively associating with ATG6, a component of the autophagosome complex. Acts as a positive regulator of drought stress response. Functions as a positive regulator of abscisic acid-mediated stomatal closure. The chain is Probable inactive E3 ubiquitin-protein ligase SINAT6 from Arabidopsis thaliana (Mouse-ear cress).